Consider the following 227-residue polypeptide: Translation initiation factor 6 (227 aa).

The protein belongs to the eIF-6 family.

Its function is as follows. Binds to the 50S ribosomal subunit and prevents its association with the 30S ribosomal subunit to form the 70S initiation complex. This is Translation initiation factor 6 from Methanococcus maripaludis (strain DSM 14266 / JCM 13030 / NBRC 101832 / S2 / LL).